A 637-amino-acid chain; its full sequence is Biosynthetic arginine decarboxylase (637 aa).

An N6-(pyridoxal phosphate)lysine modification is found at K101. A substrate-binding site is contributed by 286–296; the sequence is FDVGGGLAVDY.

Belongs to the Orn/Lys/Arg decarboxylase class-II family. SpeA subfamily. Requires Mg(2+) as cofactor. It depends on pyridoxal 5'-phosphate as a cofactor.

It carries out the reaction L-arginine + H(+) = agmatine + CO2. It functions in the pathway amine and polyamine biosynthesis; agmatine biosynthesis; agmatine from L-arginine: step 1/1. Its function is as follows. Catalyzes the biosynthesis of agmatine from arginine. This Shewanella halifaxensis (strain HAW-EB4) protein is Biosynthetic arginine decarboxylase.